A 377-amino-acid polypeptide reads, in one-letter code: Transcription factor Sox-17-alpha-B (377 aa).

2 disordered regions span residues 1–20 (MSSPDGGYGSDDQNQGKCSV) and 31–57 (QWSEPMTSLGEGKLKSDANSRSKAEGR). The segment covering 42 to 57 (GKLKSDANSRSKAEGR) has biased composition (basic and acidic residues). A DNA-binding region (HMG box) is located at residues 58–126 (IRRPMNAFMV…QHMQDHPNYK (69 aa)). The region spanning 262-376 (GSPVEGMMAC…TAVYYCNYPS (115 aa)) is the Sox C-terminal domain. The interval 282-321 (MYLPGSTRHHQHPQAGQPSPPPEAQQLGRADQTQQADMMA) is disordered. The 9aaTAD signature appears at 325–333 (TEFEQYLSY). The required for transcriptional activity and interaction with ctnnb1 stretch occupies residues 326 to 331 (EFEQYL).

As to quaternary structure, interacts (via C-terminus) with ctnnb1/beta-catenin (via Armadillo repeats); this interaction is required for inhibition of wnt-signaling. Enriched in the embryonic endoderm. Expressed in the embryonic gut, with strong expression in the posterior gut during tailbud stages. Expressed at a low level in the adult kidney and spleen.

The protein resides in the nucleus. Its function is as follows. Transcription activator. Binds to the DNA sequence 5'-AACAAT-3'. All of the sox17 proteins are required for embryonic endoderm development and gastrulation movements, and show some redundancy in function. In addition, the sox17 proteins have distinct but overlapping roles in later gut development. Acts downstream of vegt-signaling in endoderm differentiation to induce a range of endodermal genes both directly (including endodermin and dhh/chh) and indirectly. Also represses wnt-responsive genes to inhibit wnt/beta-catenin signaling. This is Transcription factor Sox-17-alpha-B (sox17a-b) from Xenopus laevis (African clawed frog).